The chain runs to 726 residues: NHL repeat-containing protein 2 (726 aa).

A Thioredoxin domain is found at glutamine 43 to aspartate 200. NHL repeat units lie at residues lysine 212–asparagine 254, asparagine 265–glutamate 307, isoleucine 335–leucine 369, phenylalanine 409–valine 439, alanine 461–lysine 505, and threonine 518–glutamate 562.

In terms of assembly, monomer. In terms of tissue distribution, ubiquitous. Detected in heart, kidney, muscle, brain, lung, liver and in skin fibroblasts (at protein level).

The protein localises to the cytoplasm. It localises to the cytosol. Functionally, required for normal embryonic development. The polypeptide is NHL repeat-containing protein 2 (NHLRC2) (Homo sapiens (Human)).